The primary structure comprises 466 residues: Tubulointerstitial nephritis antigen-like (466 aa).

A signal peptide spans 1–21 (MWGCWLGLLLLLLAGQAALEA). Positions 49–96 (EQDMCCRGRADECALPYLGATCYCDLFCNRTVSDCCPDFWDFCLGIPP) constitute an SMB domain. Intrachain disulfides connect cysteine 53/cysteine 72, cysteine 70/cysteine 72, cysteine 70/cysteine 84, cysteine 76/cysteine 83, and cysteine 84/cysteine 91. Residue asparagine 77 is glycosylated (N-linked (GlcNAc...) asparagine). Asparagine 160 carries an N-linked (GlcNAc...) asparagine glycan.

This sequence belongs to the peptidase C1 family. Post-translationally, glycosylated. Highly expressed in kidney, heart and adrenocortical cells of adrenal glands. Moderately expressed in spleen and liver. Also found in prostate, seminal vesicle, epididymis and testis in male reproductive organs. In adrenal glands is found in the outer cortical regions corresponding to the zona glomerulosa (zG) and the undifferentiated cell zone (zU) (at protein level).

It localises to the secreted. In terms of biological role, may be implicated in the adrenocortical zonation and in mechanisms for repressing the CYP11B1 gene expression in adrenocortical cells. This is a non catalytic peptidase C1 family protein. This is Tubulointerstitial nephritis antigen-like (Tinagl1) from Mus musculus (Mouse).